We begin with the raw amino-acid sequence, 55 residues long: Conotoxin Cal22c (55 aa).

The propeptide occupies 1–5 (GRPSA).

Contains 4 disulfide bonds. As to expression, expressed by the venom duct.

The protein localises to the secreted. In terms of biological role, probable neurotoxin with unknown target. Possibly targets ion channels. This Californiconus californicus (California cone) protein is Conotoxin Cal22c.